Reading from the N-terminus, the 141-residue chain is Sporulation-specific cell division protein SsgB (141 aa).

Belongs to the SsgA family. As to quaternary structure, interacts with SsgA. Interacts with FtsZ (via N-terminus).

It localises to the cell septum. Its function is as follows. Involved in sporulation-specific cell division. Required for early stages of sporulation. Important in the process of growth cessation prior to sporulation-specific cell division. Recruits cell division protein FtsZ to the future septum sites and tethers the contractile ring structure (Z ring) to the cytoplasmic membrane during sporulation. Stimulates polymerization and filament length of FtsZ in vitro. This chain is Sporulation-specific cell division protein SsgB, found in Saccharopolyspora erythraea (strain ATCC 11635 / DSM 40517 / JCM 4748 / NBRC 13426 / NCIMB 8594 / NRRL 2338).